Consider the following 370-residue polypeptide: Lipoyl synthase 1, chloroplastic (370 aa).

Disordered stretches follow at residues Met-1 to Arg-25 and Glu-39 to Ala-67. The transit peptide at Met-1–Arg-37 directs the protein to the chloroplast. Residues Cys-95, Cys-100, Cys-106, Cys-132, Cys-136, Cys-139, and Ser-347 each coordinate [4Fe-4S] cluster. The Radical SAM core domain maps to Gly-115–Arg-336.

This sequence belongs to the radical SAM superfamily. Lipoyl synthase family. [4Fe-4S] cluster serves as cofactor.

The protein resides in the plastid. It localises to the chloroplast. It catalyses the reaction [[Fe-S] cluster scaffold protein carrying a second [4Fe-4S](2+) cluster] + N(6)-octanoyl-L-lysyl-[protein] + 2 oxidized [2Fe-2S]-[ferredoxin] + 2 S-adenosyl-L-methionine + 4 H(+) = [[Fe-S] cluster scaffold protein] + N(6)-[(R)-dihydrolipoyl]-L-lysyl-[protein] + 4 Fe(3+) + 2 hydrogen sulfide + 2 5'-deoxyadenosine + 2 L-methionine + 2 reduced [2Fe-2S]-[ferredoxin]. It functions in the pathway protein modification; protein lipoylation via endogenous pathway; protein N(6)-(lipoyl)lysine from octanoyl-[acyl-carrier-protein]: step 2/2. Functionally, catalyzes the radical-mediated insertion of two sulfur atoms into the C-6 and C-8 positions of the octanoyl moiety bound to the lipoyl domains of lipoate-dependent enzymes, thereby converting the octanoylated domains into lipoylated derivatives. This Oryza sativa subsp. indica (Rice) protein is Lipoyl synthase 1, chloroplastic.